Consider the following 2201-residue polypeptide: Activating signal cointegrator 1 complex subunit 3 (2201 aa).

Ser12 is subject to Phosphoserine. 2 coiled-coil regions span residues 18–81 (KQDN…KQIV) and 328–356 (IQSE…KAGE). The Helicase ATP-binding 1 domain occupies 486-669 (ETAYNTNENM…FLHVNPCIGL (184 aa)). 499 to 506 (APTGAGKT) provides a ligand contact to ATP. Lys572 is modified (N6-acetyllysine). Residues 611-614 (DEVH) carry the DEVH box motif. In terms of domain architecture, Helicase C-terminal 1 spans 696-914 (QLNNMDEVCY…GTVTNVEEAV (219 aa)). In terms of domain architecture, SEC63 1 spans 978-1287 (STDLGRTASH…GAEAVCIINF (310 aa)). Residues 1336 to 1511 (HTLYHTDCNV…WLNIRQMGLF (176 aa)) form the Helicase ATP-binding 2 domain. Residue 1349-1356 (APTGSGKT) coordinates ATP. Residues 1453 to 1456 (DEIH) carry the DEIH box motif. Positions 1544–1739 (PTFQAIRSHS…VLSDHLNAEI (196 aa)) constitute a Helicase C-terminal 2 domain. In terms of domain architecture, SEC63 2 spans 1812-2176 (PLTYGRIASY…LGLDQQYDIH (365 aa)).

It belongs to the helicase family. As to quaternary structure, identified in the ASCC complex that contains ASCC1, ASCC2 and ASCC3. Functions as a scaffolding subunit that interacts directly with both ASCC1 and ASCC2. Interacts directly with ALKBH3, and thereby recruits ALKBH3 to the ASCC complex. Part of the ASC-1/TRIP4 complex, that contains TRIP4, ASCC1, ASCC2 and ASCC3. Part of the RQT (ribosome quality control trigger) complex, that contains ASCC2, ASCC3 and TRIP4. Associates with ribosomes; recruited to collided ribosomes. Interacts with ZCCHC4. Interacts with ZNF598. Interacts with RPS3.

The protein resides in the nucleus. It is found in the nucleus speckle. It localises to the cytoplasm. The protein localises to the cytosol. It catalyses the reaction Couples ATP hydrolysis with the unwinding of duplex DNA by translocating in the 3'-5' direction.. The catalysed reaction is ATP + H2O = ADP + phosphate + H(+). ATPase involved both in DNA repair and rescue of stalled ribosomes. 3'-5' DNA helicase involved in repair of alkylated DNA: promotes DNA unwinding to generate single-stranded substrate needed for ALKBH3, enabling ALKBH3 to process alkylated N3-methylcytosine (3mC) within double-stranded regions. Also involved in activation of the ribosome quality control (RQC) pathway, a pathway that degrades nascent peptide chains during problematic translation. Drives the splitting of stalled ribosomes that are ubiquitinated in a ZNF598-dependent manner, as part of the ribosome quality control trigger (RQT) complex. Part of the ASC-1 complex that enhances NF-kappa-B, SRF and AP1 transactivation. The sequence is that of Activating signal cointegrator 1 complex subunit 3 (ascc3) from Bos taurus (Bovine).